The sequence spans 1187 residues: Myelin transcription factor 1-like protein (1187 aa).

The interval 1 to 22 is disordered; the sequence is MDVDSEEKRHRTRSKGVRVPVE. Residues 22-65 form a CCHHC-type 1 zinc finger; that stretch reads EPAIQELFSCPTPGCDGSGHVSGKYARHRSVYGCPLAKKRKTQD. Zn(2+) contacts are provided by cysteine 31, cysteine 36, histidine 49, and cysteine 55. Disordered regions lie at residues 56–178 and 221–248; these read PLAK…QMSC and RTES…GRKS. Positions 89–172 are enriched in acidic residues; it reads ECYESDGTED…EEEEEEEENE (84 aa). The residue at position 251 (serine 251) is a Phosphoserine. Disordered regions lie at residues 343-422 and 450-514; these read SETN…DRSE and REKM…GCDG. A compositionally biased stretch (polar residues) spans 344 to 358; the sequence is ETNPQDRSQPPNMSV. Composition is skewed to basic and acidic residues over residues 362 to 377, 401 to 412, 450 to 488, and 496 to 506; these read VRQE…DRSY, AKEDGCHERDDD, REKM…DSHV, and DPSRTEKRESK. 2 CCHHC-type zinc fingers span residues 498-541 and 542-585; these read SRTE…PPEI and LAMH…KLAK. Positions 507, 512, 525, 531, 551, 556, 569, and 575 each coordinate Zn(2+). A disordered region spans residues 686 to 710; it reads ASPSSSTTSSYAPSSSSNLSCGGGS. 3 CCHHC-type zinc fingers span residues 897–940, 946–989, and 999–1042; these read LATS…GIRI, DKED…QKDG, and KSVK…MKKA. Zn(2+) contacts are provided by cysteine 906, cysteine 911, histidine 924, cysteine 930, cysteine 955, cysteine 960, histidine 973, cysteine 979, cysteine 1008, cysteine 1013, histidine 1026, and cysteine 1032. Residues 1058–1132 are a coiled coil; sequence NGIENDEEIK…ANLSQSLIHS (75 aa).

It belongs to the MYT1 family. As to quaternary structure, interacts with SIN3B. Brain.

It localises to the nucleus. It is found in the chromosome. Transcription factor that plays a key role in neuronal differentiation by specifically repressing expression of non-neuronal genes during neuron differentiation. In contrast to other transcription repressors that inhibit specific lineages, mediates repression of multiple differentiation programs. Also represses expression of negative regulators of neurogenesis, such as members of the Notch signaling pathway, including HES1. The combination of three transcription factors, ASCL1, POU3F2/BRN2 and MYT1L, is sufficient to reprogram fibroblasts and other somatic cells into induced neuronal (iN) cells in vitro. Directly binds the 5'-AAGTT-3' core motif present on the promoter of target genes and represses transcription by recruiting a multiprotein complex containing SIN3B. The 5'-AAGTT-3' core motif is absent from the promoter of neural genes. This is Myelin transcription factor 1-like protein from Mus musculus (Mouse).